Here is a 40-residue protein sequence, read N- to C-terminus: Sauvagin (40 aa).

Q1 bears the Pyrrolidone carboxylic acid mark. Position 40 is an isoleucine amide (I40).

This sequence belongs to the sauvagine/corticotropin-releasing factor/urotensin I family.

It localises to the secreted. Functionally, hypotensive and diuretic peptide. The sequence is that of Sauvagin from Phyllomedusa sauvagei (Sauvage's leaf frog).